The sequence spans 90 residues: MQSTSLFLEGINLLTLGMGFVFIFLIFLVYATRAMSQLIVRFAPPEVPAKTTNKKASANKAKANPNQNQGELLAVLTAAVHHHKTQQKLS.

The helical transmembrane segment at 10–32 (GINLLTLGMGFVFIFLIFLVYAT) threads the bilayer.

The protein belongs to the OadG family. Heterotrimer of an alpha, a beta and a gamma subunit. Na(+) is required as a cofactor.

Its subcellular location is the cell membrane. It carries out the reaction oxaloacetate + 2 Na(+)(in) + H(+) = pyruvate + 2 Na(+)(out) + CO2. In terms of biological role, catalyzes the decarboxylation of oxaloacetate coupled to Na(+) translocation. This chain is Probable oxaloacetate decarboxylase gamma chain 2 (oadG2), found in Vibrio cholerae serotype O1 (strain ATCC 39315 / El Tor Inaba N16961).